We begin with the raw amino-acid sequence, 311 residues long: Pyrimidine-specific ribonucleoside hydrolase RihA (311 aa).

The active site involves His240.

The protein belongs to the IUNH family. RihA subfamily.

Hydrolyzes with equal efficiency cytidine or uridine to ribose and cytosine or uracil, respectively. The sequence is that of Pyrimidine-specific ribonucleoside hydrolase RihA from Escherichia coli O9:H4 (strain HS).